Consider the following 440-residue polypeptide: Xaa-Pro dipeptidase (440 aa).

Mn(2+)-binding residues include aspartate 244, aspartate 255, histidine 335, glutamate 380, and glutamate 419.

Belongs to the peptidase M24B family. Bacterial-type prolidase subfamily. The cofactor is Mn(2+).

It carries out the reaction Xaa-L-Pro dipeptide + H2O = an L-alpha-amino acid + L-proline. Functionally, splits dipeptides with a prolyl residue in the C-terminal position. In Shewanella piezotolerans (strain WP3 / JCM 13877), this protein is Xaa-Pro dipeptidase.